Here is a 383-residue protein sequence, read N- to C-terminus: Spermidine/putrescine import ATP-binding protein PotA (383 aa).

The ABC transporter domain occupies 12–246; the sequence is IALRDISKVY…PSTPFVAGFI (235 aa). 48–55 lines the ATP pocket; sequence GPSGCGKT.

This sequence belongs to the ABC transporter superfamily. Spermidine/putrescine importer (TC 3.A.1.11.1) family. The complex is composed of two ATP-binding proteins (PotA), two transmembrane proteins (PotB and PotC) and a solute-binding protein (PotD).

The protein localises to the cell membrane. It carries out the reaction ATP + H2O + polyamine-[polyamine-binding protein]Side 1 = ADP + phosphate + polyamineSide 2 + [polyamine-binding protein]Side 1.. In terms of biological role, part of the ABC transporter complex PotABCD involved in spermidine/putrescine import. Responsible for energy coupling to the transport system. In Acidothermus cellulolyticus (strain ATCC 43068 / DSM 8971 / 11B), this protein is Spermidine/putrescine import ATP-binding protein PotA.